The sequence spans 478 residues: Ankyrin repeat and BTB/POZ domain-containing protein 1 (478 aa).

ANK repeat units lie at residues 1-31 (MDTS…EVNV) and 35-64 (WDST…RCEA). BTB domains are found at residues 115–182 (SDVV…DIGV) and 272–346 (PDIC…ELPP). Positions 450-478 (TVQTYSAIEEAQQQLRALENLLVSIGLDC) form a coiled coil.

It is found in the cytoplasm. In terms of biological role, may act as a mediator of the PTEN growth-suppressive signaling pathway. May play a role in developmental processes. This Rattus norvegicus (Rat) protein is Ankyrin repeat and BTB/POZ domain-containing protein 1.